A 470-amino-acid chain; its full sequence is Glutamate--tRNA ligase 2 (470 aa).

The short motif at 10–20 is the 'HIGH' region element; it reads PSPTGFLHIGS. The short motif at 239–243 is the 'KMSKS' region element; sequence KLSKR. Lys-242 is a binding site for ATP.

This sequence belongs to the class-I aminoacyl-tRNA synthetase family. Glutamate--tRNA ligase type 1 subfamily. In terms of assembly, monomer.

It is found in the cytoplasm. It carries out the reaction tRNA(Glu) + L-glutamate + ATP = L-glutamyl-tRNA(Glu) + AMP + diphosphate. Functionally, catalyzes the attachment of glutamate to tRNA(Glu) in a two-step reaction: glutamate is first activated by ATP to form Glu-AMP and then transferred to the acceptor end of tRNA(Glu). The protein is Glutamate--tRNA ligase 2 of Rickettsia prowazekii (strain Madrid E).